The primary structure comprises 378 residues: Ribosomal RNA large subunit methyltransferase G (378 aa).

Belongs to the methyltransferase superfamily. RlmG family.

It localises to the cytoplasm. The catalysed reaction is guanosine(1835) in 23S rRNA + S-adenosyl-L-methionine = N(2)-methylguanosine(1835) in 23S rRNA + S-adenosyl-L-homocysteine + H(+). Its function is as follows. Specifically methylates the guanine in position 1835 (m2G1835) of 23S rRNA. This chain is Ribosomal RNA large subunit methyltransferase G, found in Salmonella paratyphi A (strain ATCC 9150 / SARB42).